A 222-amino-acid polypeptide reads, in one-letter code: 2-C-methyl-D-erythritol 4-phosphate cytidylyltransferase (222 aa).

Belongs to the IspD/TarI cytidylyltransferase family. IspD subfamily.

It carries out the reaction 2-C-methyl-D-erythritol 4-phosphate + CTP + H(+) = 4-CDP-2-C-methyl-D-erythritol + diphosphate. It participates in isoprenoid biosynthesis; isopentenyl diphosphate biosynthesis via DXP pathway; isopentenyl diphosphate from 1-deoxy-D-xylulose 5-phosphate: step 2/6. In terms of biological role, catalyzes the formation of 4-diphosphocytidyl-2-C-methyl-D-erythritol from CTP and 2-C-methyl-D-erythritol 4-phosphate (MEP). The polypeptide is 2-C-methyl-D-erythritol 4-phosphate cytidylyltransferase (Thermotoga neapolitana (strain ATCC 49049 / DSM 4359 / NBRC 107923 / NS-E)).